The following is a 435-amino-acid chain: MNIVILGTQWGDEGKGKIVDMLTEDVAAVVRFQGGHNAGHTLIIDGEKTILRLIPSGILREGVLCLIGNGVVLSPPALMEEIEELNAKGIPVTEQLRISSACNLLLPYHVALDKAREAELGTKAIGTTGRGIGPAYEDKVARRGIRAMDLLHPDQLLEKIKKATAYHNIQLEHYYHQTPLDYQSIYNQLMEFREKIKPMIGDVSALLGNLRRQNKHIIFEGAQGSLLDIDLGTYPYVTSSNTTAGSAATGSGFGPLYFDRVLGITKAYVTRVGAGPFPTELTNEEGKKMAKRGNEFGSVTGRPRRCGWFDVISMRRTIQINSLTGIVLTKLDVLDEFAKIHLCTAYRCDGEVVNEPPFDQSLLESCEPVYEEMPGWQTSTYGLTDYSEMPKEARNYISRLEELLGVPITIISTGPDRKHTIVRQAVFNQVITAKG.

Residues 11–17 (GDEGKGK) and 39–41 (GHT) contribute to the GTP site. Asp12 serves as the catalytic Proton acceptor. 2 residues coordinate Mg(2+): Asp12 and Gly39. Residues 12-15 (DEGK), 37-40 (NAGH), Thr128, Arg142, Gln223, Thr238, and Arg302 each bind IMP. Residue His40 is the Proton donor of the active site. 298–304 (SVTGRPR) is a binding site for substrate. GTP is bound by residues Arg304, 330–332 (KLD), and 412–414 (STG).

This sequence belongs to the adenylosuccinate synthetase family. Homodimer. The cofactor is Mg(2+).

It is found in the cytoplasm. The enzyme catalyses IMP + L-aspartate + GTP = N(6)-(1,2-dicarboxyethyl)-AMP + GDP + phosphate + 2 H(+). The protein operates within purine metabolism; AMP biosynthesis via de novo pathway; AMP from IMP: step 1/2. Plays an important role in the de novo pathway of purine nucleotide biosynthesis. Catalyzes the first committed step in the biosynthesis of AMP from IMP. The protein is Adenylosuccinate synthetase of Coxiella burnetii (strain RSA 493 / Nine Mile phase I).